Here is a 94-residue protein sequence, read N- to C-terminus: Small ribosomal subunit protein uS19 (94 aa).

The protein belongs to the universal ribosomal protein uS19 family.

Protein S19 forms a complex with S13 that binds strongly to the 16S ribosomal RNA. This chain is Small ribosomal subunit protein uS19 (rpsS), found in Lactobacillus acidophilus (strain ATCC 700396 / NCK56 / N2 / NCFM).